A 200-amino-acid chain; its full sequence is Small ribosomal subunit protein uS4 (200 aa).

The interval Thr-22–Arg-42 is disordered. Positions Ser-92–Lys-152 constitute an S4 RNA-binding domain.

The protein belongs to the universal ribosomal protein uS4 family. Part of the 30S ribosomal subunit. Contacts protein S5. The interaction surface between S4 and S5 is involved in control of translational fidelity.

One of the primary rRNA binding proteins, it binds directly to 16S rRNA where it nucleates assembly of the body of the 30S subunit. In terms of biological role, with S5 and S12 plays an important role in translational accuracy. The polypeptide is Small ribosomal subunit protein uS4 (Geobacillus kaustophilus (strain HTA426)).